Reading from the N-terminus, the 214-residue chain is ATP-dependent Clp protease proteolytic subunit (214 aa).

Catalysis depends on Ser-114, which acts as the Nucleophile. His-139 is a catalytic residue.

The protein belongs to the peptidase S14 family. Fourteen ClpP subunits assemble into 2 heptameric rings which stack back to back to give a disk-like structure with a central cavity, resembling the structure of eukaryotic proteasomes.

The protein resides in the cytoplasm. It carries out the reaction Hydrolysis of proteins to small peptides in the presence of ATP and magnesium. alpha-casein is the usual test substrate. In the absence of ATP, only oligopeptides shorter than five residues are hydrolyzed (such as succinyl-Leu-Tyr-|-NHMec, and Leu-Tyr-Leu-|-Tyr-Trp, in which cleavage of the -Tyr-|-Leu- and -Tyr-|-Trp bonds also occurs).. Cleaves peptides in various proteins in a process that requires ATP hydrolysis. Has a chymotrypsin-like activity. Plays a major role in the degradation of misfolded proteins. The chain is ATP-dependent Clp protease proteolytic subunit from Nitrosomonas eutropha (strain DSM 101675 / C91 / Nm57).